Consider the following 546-residue polypeptide: Chaperonin GroEL (546 aa).

ATP contacts are provided by residues 29–32 (TLGP), lysine 50, 86–90 (DGTTT), glycine 415, and aspartate 495.

Belongs to the chaperonin (HSP60) family. Forms a cylinder of 14 subunits composed of two heptameric rings stacked back-to-back. Interacts with the co-chaperonin GroES.

Its subcellular location is the cytoplasm. The enzyme catalyses ATP + H2O + a folded polypeptide = ADP + phosphate + an unfolded polypeptide.. Together with its co-chaperonin GroES, plays an essential role in assisting protein folding. The GroEL-GroES system forms a nano-cage that allows encapsulation of the non-native substrate proteins and provides a physical environment optimized to promote and accelerate protein folding. The polypeptide is Chaperonin GroEL (Parabacteroides distasonis (strain ATCC 8503 / DSM 20701 / CIP 104284 / JCM 5825 / NCTC 11152)).